Here is a 295-residue protein sequence, read N- to C-terminus: Nucleotide-binding protein RD1_1380 (295 aa).

ATP is bound at residue 16–23 (GPSGAGRS). A GTP-binding site is contributed by 63-66 (DPRN).

Belongs to the RapZ-like family.

In terms of biological role, displays ATPase and GTPase activities. The polypeptide is Nucleotide-binding protein RD1_1380 (Roseobacter denitrificans (strain ATCC 33942 / OCh 114) (Erythrobacter sp. (strain OCh 114))).